Consider the following 674-residue polypeptide: Alpha-L-arabinofuranosidase 2 (674 aa).

The signal sequence occupies residues 1-24; it reads MDMETSWRFLRSVCLLSFILGSFS. N-linked (GlcNAc...) asparagine glycans are attached at residues asparagine 48, asparagine 180, asparagine 199, asparagine 210, asparagine 361, asparagine 522, and asparagine 548.

Belongs to the glycosyl hydrolase 51 family. High expression in flowers, siliques and stems. Observed in the vasculature of older root tissue, at the tip of anthers and in the petal blade of fully developed flowers, in floral abscission zones and in silique replum tissue. Expressed in the cambium and phloem, but not in the xylem or in the vascular system of floral tissues.

Its subcellular location is the secreted. The protein resides in the extracellular space. The protein localises to the extracellular matrix. It carries out the reaction Hydrolysis of terminal non-reducing alpha-L-arabinofuranoside residues in alpha-L-arabinosides.. In terms of biological role, may be involved in the coordinated dissolution of the cell wall matrix during abscission and in the secondary cell wall formation in xylem vessels. The polypeptide is Alpha-L-arabinofuranosidase 2 (ASD2) (Arabidopsis thaliana (Mouse-ear cress)).